A 140-amino-acid polypeptide reads, in one-letter code: uncharacterized protein (140 aa).

2 helical membrane-spanning segments follow: residues 26-43 (YLDLLLVLSIIDVLTGVI) and 64-86 (LLNFFAVILANVIDTVLNLNGVL).

The protein belongs to the bacteriophage holin family. Cp-1 holin subfamily.

It localises to the cell membrane. This is an uncharacterized protein from Bacillus subtilis (strain 168).